Reading from the N-terminus, the 250-residue chain is Ribosomal RNA small subunit methyltransferase J (250 aa).

S-adenosyl-L-methionine contacts are provided by residues 101–102 (RD), 117–118 (ER), 153–154 (SS), and D171.

Belongs to the methyltransferase superfamily. RsmJ family.

It localises to the cytoplasm. It carries out the reaction guanosine(1516) in 16S rRNA + S-adenosyl-L-methionine = N(2)-methylguanosine(1516) in 16S rRNA + S-adenosyl-L-homocysteine + H(+). Specifically methylates the guanosine in position 1516 of 16S rRNA. This chain is Ribosomal RNA small subunit methyltransferase J, found in Erwinia tasmaniensis (strain DSM 17950 / CFBP 7177 / CIP 109463 / NCPPB 4357 / Et1/99).